Consider the following 432-residue polypeptide: Adenylosuccinate synthetase (432 aa).

Residues 13–19 (GDEGKGK) and 41–43 (GHT) contribute to the GTP site. D14 serves as the catalytic Proton acceptor. Residues D14 and G41 each coordinate Mg(2+). IMP contacts are provided by residues 14–17 (DEGK), 39–42 (NAGH), T130, R144, Q225, T240, and R304. The Proton donor role is filled by H42. Position 300–306 (300–306 (ATTGRRR)) interacts with substrate. Residues R306, 332 to 334 (KLD), and 415 to 417 (STG) each bind GTP.

The protein belongs to the adenylosuccinate synthetase family. In terms of assembly, homodimer. Requires Mg(2+) as cofactor.

The protein localises to the cytoplasm. The catalysed reaction is IMP + L-aspartate + GTP = N(6)-(1,2-dicarboxyethyl)-AMP + GDP + phosphate + 2 H(+). It participates in purine metabolism; AMP biosynthesis via de novo pathway; AMP from IMP: step 1/2. Plays an important role in the de novo pathway of purine nucleotide biosynthesis. Catalyzes the first committed step in the biosynthesis of AMP from IMP. The protein is Adenylosuccinate synthetase of Salmonella typhi.